We begin with the raw amino-acid sequence, 88 residues long: U13-theraphotoxin-Cg1a (88 aa).

A signal peptide spans 1-21; it reads MKVSVLITLAVLGVMFVWASA. Residues 22-52 constitute a propeptide that is removed on maturation; sequence AELEQSGSDQKDSDSPAWLKSMERIFQSEER. 3 cysteine pairs are disulfide-bonded: Cys54-Cys68, Cys61-Cys73, and Cys67-Cys80.

This sequence belongs to the neurotoxin 10 (Hwtx-1) family. 41 (Jztx-36) subfamily. In terms of tissue distribution, expressed by the venom gland.

The protein localises to the secreted. In terms of biological role, probable ion channel inhibitor. This is U13-theraphotoxin-Cg1a from Chilobrachys guangxiensis (Chinese earth tiger tarantula).